Consider the following 562-residue polypeptide: Nucleoprotein (562 aa).

The binding site for the cap structure m7GTP stretch occupies residues 53-238 (MRRVKRDDSD…ITQEESQINI (186 aa)). Mn(2+) is bound by residues Asp-381 and Glu-383. 4 residues coordinate Zn(2+): Glu-391, Cys-498, His-501, and Cys-522. Asp-526 serves as a coordination point for Mn(2+).

This sequence belongs to the arenaviridae nucleocapsid protein family. In terms of assembly, homomultimerizes to form the nucleocapsid. Binds to viral genomic RNA. Interacts with glycoprotein G2. Interacts with protein Z; this interaction probably directs the encapsidated genome to budding sites. Interacts with protein L; this interaction does not interfere with Z-L interaction. Interacts with host IKBKE (via Protein kinase domain); the interaction inhibits IKBKE kinase activity.

It localises to the virion. It is found in the host cytoplasm. In terms of biological role, encapsidates the genome, protecting it from nucleases. The encapsidated genomic RNA is termed the nucleocapsid (NC). Serves as template for viral transcription and replication. The increased presence of protein N in host cell does not seem to trigger the switch from transcription to replication as observed in other negative strain RNA viruses. Through the interaction with host IKBKE, strongly inhibits the phosphorylation and nuclear translocation of host IRF3, a protein involved in interferon activation pathway, leading to the inhibition of interferon-beta and IRF3-dependent promoters activation. Also encodes a functional 3'-5' exoribonuclease that degrades preferentially dsRNA substrates and thereby participates in the suppression of interferon induction. The protein is Nucleoprotein of Neotoma (wood rats).